We begin with the raw amino-acid sequence, 410 residues long: MGEKPGTRVFKKSSPNCKLTVYLGKRDFVDHLDKVDPVDGVVLVDPDYLKDRKVFVTLTCAFRYGREDLDVLGLSFRKDLFIATYQAFPPMPNPPRPPTRLQDRLLKKLGQHAHPFFFTIPQNLPCSVTLQPGPEDTGKACGVDFEIRAFCAKSIEEKSHKRNSVRLIIRKVQFAPETPGPQPSAETTRHFLMSDRRSLHLEASLDKELYYHGEPLNVNVHVTNNSAKTVKKIRVSVRQYADICLFSTAQYKCPVAQLEQDDQVSPSSTFCKVYTITPLLSDNREKRGLALDGQLKHEDTNLASSTIVKEGANKEVLGILVSYRVKVKLVVSRGGDVSVELPFVLMHPKPHDHITLPRPQSAPREIDIPVDTNLIEFDTNYATDDDIVFEDFARLRLKGMKDDDCDDQFC.

Tyrosine 48 is subject to Phosphotyrosine. Proline 176 and proline 181 each carry hydroxyproline; by PHD2. Residues 241–410 (ADICLFSTAQ…KDDDCDDQFC (170 aa)) form an interaction with TRAF6 region. Phosphoserine is present on serine 361. The tract at residues 378-410 (DTNYATDDDIVFEDFARLRLKGMKDDDCDDQFC) is interaction with AP2B1. A Phosphothreonine; by CaMK2 modification is found at threonine 383. A [DE]-X(1,2)-F-X-X-[FL]-X-X-X-R motif motif is present at residues 386–396 (DIVFEDFARLR).

It belongs to the arrestin family. In terms of assembly, homooligomer; the self-association is mediated by InsP6-binding. Heterooligomer with ARRB1; the association is mediated by InsP6-binding. Interacts with ADRB2 and CHRM2. Interacts with PDE4A. Interacts with PDE4D. Interacts with MAPK10, MAPK1 and MAPK3. Interacts with DRD2. Interacts with FSHR. Interacts with CLTC. Interacts with HTR2C. Interacts with CCR5. Interacts with CXCR4. Interacts with SRC. Interacts with DUSP16; the interaction is interrupted by stimulation of AGTR1 and activation of MAPK10. Interacts with CHUK; the interaction is enhanced stimulation of ADRB2. Interacts with RELA. Interacts with MDM2; the interaction is enhanced by activation of GPCRs. Interacts with SLC9A5. Interacts with TRAF6. Interacts with IGF1R. Interacts with ENG. Interacts with KIR2DL1, KIR2DL3 and KIR2DL4. Interacts with LDLR. Interacts with AP2B1. Interacts with C5AR1. Interacts with RAF1. Interacts with MAP2K1. Interacts with MAPK1. Interacts with MAPK10; the interaction enhances MAPK10 activation by MAP3K5. Interacts with MAP2K4; the interaction is enhanced by presence of MAP3K5 and MAPK10. Interacts with MAP3K5. Interacts with AKT1. Interacts with IKBKB and MAP3K14. Interacts with SMO (activated). Interacts with GSK3A and GSK3B. Associates with protein phosphatase 2A (PP2A). Interacts with CXCR4; the interaction is dependent on C-terminal phosphorylation of CXCR4 and allows activation of MAPK1 and MAPK3. Interacts with GPR143. Interacts with HCK and CXCR1 (phosphorylated). Interacts with ACKR3 and ACKR4. Interacts with ARRDC1; the interaction is direct. Interacts with GPR61, GPR62 and GPR135. Interacts (via NACHT and LRR domains) with NLRP3; this interaction is direct and inducible by omega-3 polyunsaturated fatty acids (PUFAs). Interacts with FFAR4 (via C-terminus); this interaction is stimulated by long-chain fatty acids (LCFAs). Interacts with GPR35. Interacts with GPR84. Interacts with TIGIT; this interaction inhibits the NF-kappa-B pathway. Interacts with TGFBR3. Post-translationally, phosphorylated at Thr-383 in the cytoplasm; probably dephosphorylated at the plasma membrane. The phosphorylation does not regulate internalization and recycling of ADRB2, interaction with clathrin or AP2B1. The ubiquitination status appears to regulate the formation and trafficking of beta-arrestin-GPCR complexes and signaling. Ubiquitination appears to occur GPCR-specific. Ubiquitinated by MDM2; the ubiquitination is required for rapid internalization of ADRB2. Deubiquitinated by USP33; the deubiquitination leads to a dissociation of the beta-arrestin-GPCR complex. Stimulation of a class A GPCR, such as ADRB2, induces transient ubiquitination and subsequently promotes association with USP33. Stimulation of a class B GPCR promotes a sustained ubiquitination. Deubiquitinated by USP20; allowing USP20 to deubiquitinate TRAF6 leading to inhibition of NF-kappa-B signaling. In terms of processing, hydroxylation by PHD2 modulates the rate of internalization by slowing down recruitment to the plasma membrane and inhibiting subsequent co-internalization with class A receptors. Predominantly localized in neuronal tissues and in the spleen.

It is found in the cytoplasm. It localises to the nucleus. The protein localises to the cell membrane. Its subcellular location is the membrane. The protein resides in the clathrin-coated pit. It is found in the cytoplasmic vesicle. Functions in regulating agonist-mediated G-protein coupled receptor (GPCR) signaling by mediating both receptor desensitization and resensitization processes. During homologous desensitization, beta-arrestins bind to the GPRK-phosphorylated receptor and sterically preclude its coupling to the cognate G-protein; the binding appears to require additional receptor determinants exposed only in the active receptor conformation. The beta-arrestins target many receptors for internalization by acting as endocytic adapters (CLASPs, clathrin-associated sorting proteins) and recruiting the GPRCs to the adapter protein 2 complex 2 (AP-2) in clathrin-coated pits (CCPs). However, the extent of beta-arrestin involvement appears to vary significantly depending on the receptor, agonist and cell type. Internalized arrestin-receptor complexes traffic to intracellular endosomes, where they remain uncoupled from G-proteins. Two different modes of arrestin-mediated internalization occur. Class A receptors, like ADRB2, OPRM1, ENDRA, D1AR and ADRA1B dissociate from beta-arrestin at or near the plasma membrane and undergo rapid recycling. Class B receptors, like AVPR2, AGTR1, NTSR1, TRHR and TACR1 internalize as a complex with arrestin and traffic with it to endosomal vesicles, presumably as desensitized receptors, for extended periods of time. Receptor resensitization then requires that receptor-bound arrestin is removed so that the receptor can be dephosphorylated and returned to the plasma membrane. Mediates endocytosis of CCR7 following ligation of CCL19 but not CCL21. Involved in internalization of P2RY1, P2RY4, P2RY6 and P2RY11 and ATP-stimulated internalization of P2RY2. Involved in phosphorylation-dependent internalization of OPRD1 and subsequent recycling or degradation. Involved in ubiquitination of IGF1R. Beta-arrestins function as multivalent adapter proteins that can switch the GPCR from a G-protein signaling mode that transmits short-lived signals from the plasma membrane via small molecule second messengers and ion channels to a beta-arrestin signaling mode that transmits a distinct set of signals that are initiated as the receptor internalizes and transits the intracellular compartment. Acts as a signaling scaffold for MAPK pathways such as MAPK1/3 (ERK1/2) and MAPK10 (JNK3). ERK1/2 and JNK3 activated by the beta-arrestin scaffold are largely excluded from the nucleus and confined to cytoplasmic locations such as endocytic vesicles, also called beta-arrestin signalosomes. Acts as a signaling scaffold for the AKT1 pathway. GPCRs for which the beta-arrestin-mediated signaling relies on both ARRB1 and ARRB2 (codependent regulation) include ADRB2, F2RL1 and PTH1R. For some GPCRs the beta-arrestin-mediated signaling relies on either ARRB1 or ARRB2 and is inhibited by the other respective beta-arrestin form (reciprocal regulation). Increases ERK1/2 signaling in AGTR1- and AVPR2-mediated activation (reciprocal regulation). Involved in CCR7-mediated ERK1/2 signaling involving ligand CCL19. Is involved in type-1A angiotensin II receptor/AGTR1-mediated ERK activity. Is involved in type-1A angiotensin II receptor/AGTR1-mediated MAPK10 activity. Is involved in dopamine-stimulated AKT1 activity in the striatum by disrupting the association of AKT1 with its negative regulator PP2A. Involved in AGTR1-mediated chemotaxis. Appears to function as signaling scaffold involved in regulation of MIP-1-beta-stimulated CCR5-dependent chemotaxis. Involved in attenuation of NF-kappa-B-dependent transcription in response to GPCR or cytokine stimulation by interacting with and stabilizing CHUK. Suppresses UV-induced NF-kappa-B-dependent activation by interacting with CHUK. The function is promoted by stimulation of ADRB2 and dephosphorylation of ARRB2. Involved in IL8-mediated granule release in neutrophils. Involved in p53/TP53-mediated apoptosis by regulating MDM2 and reducing the MDM2-mediated degradation of p53/TP53. May serve as nuclear messenger for GPCRs. Upon stimulation of OR1D2, may be involved in regulation of gene expression during the early processes of fertilization. Also involved in regulation of receptors other than GPCRs. Involved in endocytosis of TGFBR2 and TGFBR3 and down-regulates TGF-beta signaling such as NF-kappa-B activation. Involved in endocytosis of low-density lipoprotein receptor/LDLR. Involved in endocytosis of smoothened homolog/Smo, which also requires GRK2. Involved in endocytosis of SLC9A5. Involved in endocytosis of ENG and subsequent TGF-beta-mediated ERK activation and migration of epithelial cells. Involved in Toll-like receptor and IL-1 receptor signaling through the interaction with TRAF6 which prevents TRAF6 autoubiquitination and oligomerization required for activation of NF-kappa-B and JUN. Involved in insulin resistance by acting as insulin-induced signaling scaffold for SRC, AKT1 and INSR. Involved in regulation of inhibitory signaling of natural killer cells by recruiting PTPN6 and PTPN11 to KIR2DL1. Involved in the internalization of the atypical chemokine receptor ACKR3. Acts as an adapter protein coupling FFAR4 receptor to specific downstream signaling pathways, as well as mediating receptor endocytosis. During the activation step of NLRP3 inflammasome, directly associates with NLRP3 leading to inhibition of pro-inflammatory cytokine release and inhibition of inflammation. This Rattus norvegicus (Rat) protein is Beta-arrestin-2 (Arrb2).